Reading from the N-terminus, the 76-residue chain is Acyl carrier protein (76 aa).

Residues 2–76 (SDIAERVKKI…QAIDYIQSHT (75 aa)) form the Carrier domain. Ser-36 is subject to O-(pantetheine 4'-phosphoryl)serine.

This sequence belongs to the acyl carrier protein (ACP) family. 4'-phosphopantetheine is transferred from CoA to a specific serine of apo-ACP by AcpS. This modification is essential for activity because fatty acids are bound in thioester linkage to the sulfhydryl of the prosthetic group.

The protein resides in the cytoplasm. It participates in lipid metabolism; fatty acid biosynthesis. Functionally, carrier of the growing fatty acid chain in fatty acid biosynthesis. The polypeptide is Acyl carrier protein (Methylococcus capsulatus (strain ATCC 33009 / NCIMB 11132 / Bath)).